The primary structure comprises 740 residues: Catalase-peroxidase (740 aa).

Residues 1–14 are compositionally biased toward basic and acidic residues; it reads MTENHDAIVTDAKS. The tract at residues 1–21 is disordered; the sequence is MTENHDAIVTDAKSEGSGGCP. Residues 108–231 constitute a cross-link (tryptophyl-tyrosyl-methioninium (Trp-Tyr) (with M-257)); that stretch reads WHSAGTYRIS…LGAVQMGLIY (124 aa). Catalysis depends on H109, which acts as the Proton acceptor. Residues 231 to 257 constitute a cross-link (tryptophyl-tyrosyl-methioninium (Tyr-Met) (with W-108)); sequence YVNPEGPNGNPDPIAAARDIRETFRRM. Position 272 (H272) interacts with heme b.

This sequence belongs to the peroxidase family. Peroxidase/catalase subfamily. Homodimer. The cofactor is heme b. In terms of processing, formation of the three residue Trp-Tyr-Met cross-link is important for the catalase, but not the peroxidase activity of the enzyme.

It catalyses the reaction H2O2 + AH2 = A + 2 H2O. The catalysed reaction is 2 H2O2 = O2 + 2 H2O. In terms of biological role, bifunctional enzyme with both catalase and broad-spectrum peroxidase activity. The sequence is that of Catalase-peroxidase from Streptomyces reticuli.